We begin with the raw amino-acid sequence, 367 residues long: 4-hydroxyphenylpyruvate dioxygenase (367 aa).

VOC domains follow at residues 3-135 and 166-324; these read GFDH…FVDR and LIDH…IFTN. Fe cation is bound by residues H169, H252, and E335.

Belongs to the 4HPPD family. Fe cation is required as a cofactor.

It catalyses the reaction 3-(4-hydroxyphenyl)pyruvate + O2 = homogentisate + CO2. It participates in amino-acid degradation; L-phenylalanine degradation; acetoacetate and fumarate from L-phenylalanine: step 3/6. Key enzyme in the degradation of tyrosine. This chain is 4-hydroxyphenylpyruvate dioxygenase (hpd), found in Dictyostelium discoideum (Social amoeba).